A 190-amino-acid chain; its full sequence is Xanthine phosphoribosyltransferase (190 aa).

Xanthine contacts are provided by Leu-20 and Asn-27. 128–132 (ANGQA) contributes to the 5-phospho-alpha-D-ribose 1-diphosphate binding site. Residue Lys-156 coordinates xanthine.

Belongs to the purine/pyrimidine phosphoribosyltransferase family. Xpt subfamily. As to quaternary structure, homodimer.

The protein localises to the cytoplasm. It catalyses the reaction XMP + diphosphate = xanthine + 5-phospho-alpha-D-ribose 1-diphosphate. The protein operates within purine metabolism; XMP biosynthesis via salvage pathway; XMP from xanthine: step 1/1. Converts the preformed base xanthine, a product of nucleic acid breakdown, to xanthosine 5'-monophosphate (XMP), so it can be reused for RNA or DNA synthesis. The sequence is that of Xanthine phosphoribosyltransferase from Pediococcus pentosaceus (strain ATCC 25745 / CCUG 21536 / LMG 10740 / 183-1w).